A 374-amino-acid polypeptide reads, in one-letter code: Putative G-protein coupled receptor-like protein B0244.6 (374 aa).

Topologically, residues 1–54 (MTQNHYTTSIFANCSKHYEFEILLETCTNSTNPCHAVSQIQSAITIAYVDYYTS) are extracellular. A helical membrane pass occupies residues 55-75 (VALFSIAALLDIYCLIITIPL). Residues 76–86 (YRRMKDDSKKK) are Cytoplasmic-facing. Residues 87-107 (YVFLITRCISGLLLVVAWLLI) traverse the membrane as a helical segment. Residues 108-137 (QCIYLRFIAPSQDNLPYYVLALALNIGSTY) lie on the Extracellular side of the membrane. The helical transmembrane segment at 138-158 (VLLGSYVGMAGILYLGVLNPI) threads the bilayer. Topologically, residues 159 to 169 (AFNQHLTLRIV) are cytoplasmic. A helical transmembrane segment spans residues 170–190 (YIAVCIIFVISIFISIPLAIF). At 191–216 (QALMTVPTSSMSCTDTACAPLITLIN) the chain is on the extracellular side. Residues 217–237 (FVLVFGSLITTTLTLTFVLIS) traverse the membrane as a helical segment. Over 238–262 (LCRHRKEFKKLDTTSNTSLNSAVRL) the chain is Cytoplasmic. A helical membrane pass occupies residues 263–283 (LKFTLFAVLLLVAAEVIPFVI). Residues 284–304 (SETKKKHSVVTGCYYFYHSGK) lie on the Extracellular side of the membrane. A helical transmembrane segment spans residues 305–325 (VIQYAVFALTESSIWSIALII). At 326-374 (DPLINIIFDRTVSKKATDQVKWMRKSCVGLVRKVTKRSNPENFTETSEI) the chain is on the cytoplasmic side.

The protein belongs to the G-protein coupled receptor 1 family. B0244 subfamily.

The protein localises to the cell membrane. The chain is Putative G-protein coupled receptor-like protein B0244.6 from Caenorhabditis elegans.